The primary structure comprises 156 residues: Small ribosomal subunit protein uS7 (156 aa).

Belongs to the universal ribosomal protein uS7 family. In terms of assembly, part of the 30S ribosomal subunit. Contacts proteins S9 and S11.

Functionally, one of the primary rRNA binding proteins, it binds directly to 16S rRNA where it nucleates assembly of the head domain of the 30S subunit. Is located at the subunit interface close to the decoding center, probably blocks exit of the E-site tRNA. This Mycobacterium leprae (strain Br4923) protein is Small ribosomal subunit protein uS7.